The following is a 345-amino-acid chain: NADH-ubiquinone oxidoreductase chain 2 (345 aa).

10 consecutive transmembrane segments (helical) span residues 1-21 (MNPLINFILLSSMIAGTILTT), 26-46 (WVSAWLGLELNTLAIIPIISM), 60-80 (FLIQAASSALVLLSGIINAHL), 96-115 (IALTTALATKLGLAPIHFWL), 122-144 (VPILTALIIATWQKIAPMALLIM), 148-170 (LIPTPITLIMGLTSTIVGGLGGL), 201-223 (TLLNLILYIPMTSLTMLIMHLTM), 242-262 (SLFLLSLLSLGGLPPLSGFIP), 274-294 (NLTPMAFMMAITALLSLMFYL), and 323-343 (TSTLPLLSLISIFLLPITPTL).

It belongs to the complex I subunit 2 family.

The protein resides in the mitochondrion inner membrane. The catalysed reaction is a ubiquinone + NADH + 5 H(+)(in) = a ubiquinol + NAD(+) + 4 H(+)(out). Core subunit of the mitochondrial membrane respiratory chain NADH dehydrogenase (Complex I) that is believed to belong to the minimal assembly required for catalysis. Complex I functions in the transfer of electrons from NADH to the respiratory chain. The immediate electron acceptor for the enzyme is believed to be ubiquinone. This is NADH-ubiquinone oxidoreductase chain 2 (MT-ND2) from Varanus nebulosus (Clouded monitor).